The following is a 90-amino-acid chain: U7-theraphotoxin-Hhn1a 7 (90 aa).

The signal sequence occupies residues 1-19 (MKTAIFTVVLALAVFAVLS). Positions 20–50 (FGWEANEKALSEGFTELIHEKEAASETEARE) are excised as a propeptide. Cystine bridges form between cysteine 51–cysteine 65, cysteine 58–cysteine 70, and cysteine 64–cysteine 81.

Belongs to the neurotoxin 10 (Hwtx-1) family. 13 (Hntx-13) subfamily. As to expression, expressed by the venom gland.

Its subcellular location is the secreted. Its function is as follows. Ion channel inhibitor. The sequence is that of U7-theraphotoxin-Hhn1a 7 from Cyriopagopus hainanus (Chinese bird spider).